Consider the following 584-residue polypeptide: Vesicular glutamate transporter 2.1 (584 aa).

Residues 1–70 (METPREPAGF…CTCFGLPRRY (70 aa)) lie on the Cytoplasmic side of the membrane. Residues 71–91 (IIAIMSGLGFCISFGIRCNLG) traverse the membrane as a helical segment. Topologically, residues 92–124 (VAIVSMVNNSTIHLNGKIIIKEKAKFNWDPETV) are vesicular. Residues N99 and N100 are each glycosylated (N-linked (GlcNAc...) asparagine). The chain crosses the membrane as a helical span at residues 125–145 (GLIHGSFFWGYIVTQIPGGYI). At 146 to 148 (SSR) the chain is on the cytoplasmic side. Residues 149–169 (LAANRVFGAAILLTSTLNMFI) form a helical membrane-spanning segment. The Vesicular segment spans residues 170–177 (PSAARGHY). A helical transmembrane segment spans residues 178-198 (GCVIFVRILQGLVEGVTYPAC). Residues 199–216 (HGIWSKWAPPLERSRLAT) lie on the Cytoplasmic side of the membrane. The chain crosses the membrane as a helical span at residues 217–237 (TSFCGSYAGAVIAMPLAGILV). At 238–244 (QYTGWSS) the chain is on the vesicular side. A helical transmembrane segment spans residues 245–265 (VFYVYGCFGIFWYMFWILVSY). Residues 266 to 310 (ESPAEHPTITAEERCYIEESIGESAKLLGPADKFKTPWRKFFTSM) lie on the Cytoplasmic side of the membrane. A helical membrane pass occupies residues 311–331 (PVYAIIVANFCRSWTFYLLLI). Residues 332–349 (SQPAYFEEVFGFEISKVG) lie on the Vesicular side of the membrane. Residues 350–370 (MLSALPHLVMTIIVPIGGQLA) form a helical membrane-spanning segment. Topologically, residues 371–386 (DHLRSKNILSTTTVRK) are cytoplasmic. Residues 387–407 (IMNCGGFGMEATLLLIVGYSH) form a helical membrane-spanning segment. Residues 408–409 (SK) are Vesicular-facing. A helical transmembrane segment spans residues 410-430 (GVAISFLVLAVGFSGFAISGF). The Cytoplasmic segment spans residues 431 to 445 (NVNHLDIAPRYASIL). Residues 446–466 (MGISNGVGTLSGMVCPLIVGA) traverse the membrane as a helical segment. Residues 467 to 477 (MTKHKTREEWQ) are Vesicular-facing. A helical transmembrane segment spans residues 478-498 (YVFLIASLVHYGGVIFYGIFA). Topologically, residues 499–584 (SGEKQPWADP…YGYRQGGNYS (86 aa)) are cytoplasmic.

The protein belongs to the major facilitator superfamily. Sodium/anion cotransporter family. VGLUT subfamily. Expressed in spinal cord and retinal ganglion cells.

The protein resides in the cytoplasmic vesicle. It is found in the secretory vesicle. Its subcellular location is the synaptic vesicle membrane. It localises to the membrane. The protein localises to the synapse. The protein resides in the synaptosome. It is found in the cell membrane. It catalyses the reaction L-glutamate(out) = L-glutamate(in). It carries out the reaction 3 Na(+)(out) + phosphate(out) = 3 Na(+)(in) + phosphate(in). The enzyme catalyses phosphate(in) = phosphate(out). The catalysed reaction is K(+)(in) + H(+)(out) = K(+)(out) + H(+)(in). It catalyses the reaction chloride(in) = chloride(out). With respect to regulation, chloride channel activity is allosterically activated by lumenal H(+) and Cl(-) leading to synaptic vesicles acidification. The L-glutamate transport activity is allosterically activated by lumenal H(+) and Cl(-). The allosteric requirement for H(+) efficiently prevents non-vesicular efflux across the plasma membrane. The L-glutamate uniporter activity exhibits a biphasic dependence on chloride concentration. Its function is as follows. Multifunctional transporter that transports L-glutamate as well as multiple ions such as chloride, proton, potassium, sodium and phosphate. At the synaptic vesicle membrane, mainly functions as a uniporter which transports preferentially L-glutamate but also, phosphate from the cytoplasm into synaptic vesicles at presynaptic nerve terminals of excitatory neural cells. The L-glutamate or phosphate uniporter activity is electrogenic and is driven by the proton electrochemical gradient, mainly by the electrical gradient established by the vacuolar H(+)-ATPase across the synaptic vesicle membrane. In addition, functions as a chloride channel that allows a chloride permeation through the synaptic vesicle membrane therefore affects the proton electrochemical gradient and promotes synaptic vesicles acidification. Moreover, functions as a vesicular K(+)/H(+) antiport allowing to maintain the electrical gradient and to decrease chemical gradient and therefore sustain vesicular L-glutamate uptake. The vesicular H(+)/H(+) antiport activity is electroneutral. At the plasma membrane, following exocytosis, functions as a symporter of Na(+) and phosphate from the extracellular space to the cytoplasm allowing synaptic phosphate homeostasis regulation. The symporter activity is driven by an inside negative membrane potential and is electrogenic. Also involved in the regulation of retinal hyaloid vessel regression during postnatal development. May also play a role in the endocrine L-glutamatergic system of other tissues such as pineal gland and pancreas. Required for glutamate release by retinotectal synapses and visual acuity. The protein is Vesicular glutamate transporter 2.1 (slc17a6b) of Danio rerio (Zebrafish).